A 346-amino-acid polypeptide reads, in one-letter code: Ketol-acid reductoisomerase (NADP(+)) (346 aa).

A KARI N-terminal Rossmann domain is found at 1–141 (KKNSILKKNQ…GAHHAGVLES (141 aa)). NADP(+)-binding positions include Ser11 and 41–43 (DKQ). His65 is a catalytic residue. NADP(+) is bound at residue Gly91. KARI C-terminal knotted domains are found at residues 142–286 (SFVA…PEQE) and 287–346 (YYDH…NKVI). Residues Asp150, Glu154, Glu322, and Glu326 each contribute to the Mg(2+) site.

The protein belongs to the ketol-acid reductoisomerase family. Requires Mg(2+) as cofactor.

The catalysed reaction is (2R)-2,3-dihydroxy-3-methylbutanoate + NADP(+) = (2S)-2-acetolactate + NADPH + H(+). It carries out the reaction (2R,3R)-2,3-dihydroxy-3-methylpentanoate + NADP(+) = (S)-2-ethyl-2-hydroxy-3-oxobutanoate + NADPH + H(+). Its pathway is amino-acid biosynthesis; L-isoleucine biosynthesis; L-isoleucine from 2-oxobutanoate: step 2/4. It functions in the pathway amino-acid biosynthesis; L-valine biosynthesis; L-valine from pyruvate: step 2/4. In terms of biological role, involved in the biosynthesis of branched-chain amino acids (BCAA). Catalyzes an alkyl-migration followed by a ketol-acid reduction of (S)-2-acetolactate (S2AL) to yield (R)-2,3-dihydroxy-isovalerate. In the isomerase reaction, S2AL is rearranged via a Mg-dependent methyl migration to produce 3-hydroxy-3-methyl-2-ketobutyrate (HMKB). In the reductase reaction, this 2-ketoacid undergoes a metal-dependent reduction by NADPH to yield (R)-2,3-dihydroxy-isovalerate. This Buchnera aphidicola subsp. Uroleucon rurale protein is Ketol-acid reductoisomerase (NADP(+)) (ilvC).